A 405-amino-acid chain; its full sequence is 3-isopropylmalate dehydrogenase 2, chloroplastic (405 aa).

The transit peptide at 1–33 directs the protein to the chloroplast; sequence MAAALQTNIRTVKVPATFRAVSKQSLAPFRVRC. The residue at position 70 (Ser70) is a Phosphoserine. NAD(+) is bound at residue 114 to 129; that stretch reads IGGYKWDNNEKHLRPE. Residues Arg136, Arg146, and Arg174 each coordinate substrate. Asn234 provides a ligand contact to NAD(+). Residue Asp264 coordinates substrate. Position 264 (Asp264) interacts with Mg(2+). Asn265 contacts NAD(+). Mg(2+) contacts are provided by Asp288 and Asp292. 318 to 334 is an NAD(+) binding site; it reads EPIHGSAPDIAGQDKAN.

This sequence belongs to the isocitrate and isopropylmalate dehydrogenases family. In terms of assembly, homodimer. Requires Mg(2+) as cofactor. Mn(2+) is required as a cofactor. As to expression, expressed at low levels in seedlings, cotyledons, hypocotyls, flowers, roots, pollen, leaves and stems.

Its subcellular location is the plastid. It is found in the chloroplast stroma. The enzyme catalyses (2R,3S)-3-isopropylmalate + NAD(+) = 4-methyl-2-oxopentanoate + CO2 + NADH. Its pathway is amino-acid biosynthesis; L-leucine biosynthesis; L-leucine from 3-methyl-2-oxobutanoate: step 3/4. Regulated by a thiol-based redox modification. In terms of biological role, involved in leucine biosynthesis; catalyzes the oxidative decarboxylation step in leucine biosynthesis (primary metabolism). Catalyzes the oxidation of 3-carboxy-2-hydroxy-4-methylpentanoate (3-isopropylmalate, 3-IPM) to 3-carboxy-4-methyl-2-oxopentanoate. The product decarboxylates to 4-methyl-2 oxopentanoate. Required during pollen development and involved in embryo sac development. The sequence is that of 3-isopropylmalate dehydrogenase 2, chloroplastic from Arabidopsis thaliana (Mouse-ear cress).